Reading from the N-terminus, the 189-residue chain is Low affinity inorganic phosphate transporter 2 (189 aa).

Residues 1 to 55 (TARYTALVAKDAKRAAADMGKVLHVEIDPEDAKVERMAKDESNQFGLFSWEFVRR) are Cytoplasmic-facing. The helical transmembrane segment at 56–76 (HGLHLFGTCSTWFLLDIAFYS) threads the bilayer. Topologically, residues 77-111 (QNLFQKDVFTAIGWIPPAKTMNAVQEVYKIARAQT) are extracellular. A helical membrane pass occupies residues 112-132 (LIALCSTVPGYWFTVAFIDII). The Cytoplasmic segment spans residues 133–134 (GR). The helical transmembrane segment at 135–155 (FAIQLMGFFFMTVFMFAIAIP) threads the bilayer. Topologically, residues 156-165 (YHHWTLQENR) are extracellular. A helical membrane pass occupies residues 166 to 186 (IGFVIMYSLTFFFANFGPNAT). Topologically, residues 187 to 189 (TFV) are cytoplasmic.

It belongs to the major facilitator superfamily. Phosphate:H(+) symporter (TC 2.A.1.9) family.

The protein resides in the cell membrane. The enzyme catalyses phosphate(in) + H(+)(in) = phosphate(out) + H(+)(out). Low-affinity transporter for external inorganic phosphate (Pi). This is Low affinity inorganic phosphate transporter 2 from Petunia hybrida (Petunia).